Consider the following 218-residue polypeptide: Eukaryotic translation initiation factor 3 subunit K (218 aa).

The PCI domain maps to 44–205 (YDWGANLAVL…NIKTKNITEK (162 aa)).

Belongs to the eIF-3 subunit K family. Component of the eukaryotic translation initiation factor 3 (eIF-3) complex.

The protein resides in the cytoplasm. Its function is as follows. Component of the eukaryotic translation initiation factor 3 (eIF-3) complex, which is involved in protein synthesis of a specialized repertoire of mRNAs and, together with other initiation factors, stimulates binding of mRNA and methionyl-tRNAi to the 40S ribosome. The eIF-3 complex specifically targets and initiates translation of a subset of mRNAs involved in cell proliferation. This chain is Eukaryotic translation initiation factor 3 subunit K, found in Bombyx mori (Silk moth).